Reading from the N-terminus, the 288-residue chain is Energy-coupling factor transporter ATP-binding protein EcfA2 (288 aa).

Residues 3-246 form the ABC transporter domain; that stretch reads IKLEQLGYCY…PDELVDLGLS (244 aa). Residue 40-47 coordinates ATP; it reads GHTGSGKS.

Belongs to the ABC transporter superfamily. Energy-coupling factor EcfA family. As to quaternary structure, forms a stable energy-coupling factor (ECF) transporter complex composed of 2 membrane-embedded substrate-binding proteins (S component), 2 ATP-binding proteins (A component) and 2 transmembrane proteins (T component).

The protein resides in the cell membrane. Functionally, ATP-binding (A) component of a common energy-coupling factor (ECF) ABC-transporter complex. Unlike classic ABC transporters this ECF transporter provides the energy necessary to transport a number of different substrates. The polypeptide is Energy-coupling factor transporter ATP-binding protein EcfA2 (Listeria monocytogenes serovar 1/2a (strain ATCC BAA-679 / EGD-e)).